Here is a 299-residue protein sequence, read N- to C-terminus: tRNA dimethylallyltransferase (299 aa).

An ATP-binding site is contributed by 11-18; sequence GPTAVGKT. 13-18 provides a ligand contact to substrate; sequence TAVGKT. An interaction with substrate tRNA region spans residues 36-39; the sequence is DSQQ.

It belongs to the IPP transferase family. Monomer. It depends on Mg(2+) as a cofactor.

It carries out the reaction adenosine(37) in tRNA + dimethylallyl diphosphate = N(6)-dimethylallyladenosine(37) in tRNA + diphosphate. Functionally, catalyzes the transfer of a dimethylallyl group onto the adenine at position 37 in tRNAs that read codons beginning with uridine, leading to the formation of N6-(dimethylallyl)adenosine (i(6)A). The chain is tRNA dimethylallyltransferase from Streptococcus pyogenes serotype M12 (strain MGAS2096).